The sequence spans 291 residues: MPELPEVEVTRLGLLPHITGRRIVRAVVRHHGLRWPVDPALPELLAGLTVTRLLRRGKYLLIECVPEVEQSGRAADTVGGWLLIHLGMTGTLRVLETPVPPGLHDHVDIELAGATGVHVTLRYRDPRRFGAVLWHAGDEAGLAEHPLLRNLGIEPFDARFDGDWMFARTRGRRVAIKSALLAGDIVVGVGNIYCSESLFRAGIRPTTAAGRISRPRYAALADAIRATLADAIARGGSTLRDFVGSDGQSGYFQLEAFVYDRAGLPCRACGTPIRQIVQGQRSTFCCPTCQR.

Catalysis depends on P2, which acts as the Schiff-base intermediate with DNA. The active-site Proton donor is the E3. The Proton donor; for beta-elimination activity role is filled by K58. H104, R127, and R172 together coordinate DNA. Residues 257–291 (FVYDRAGLPCRACGTPIRQIVQGQRSTFCCPTCQR) form an FPG-type zinc finger. The Proton donor; for delta-elimination activity role is filled by R281.

It belongs to the FPG family. As to quaternary structure, monomer. Requires Zn(2+) as cofactor.

The enzyme catalyses Hydrolysis of DNA containing ring-opened 7-methylguanine residues, releasing 2,6-diamino-4-hydroxy-5-(N-methyl)formamidopyrimidine.. It catalyses the reaction 2'-deoxyribonucleotide-(2'-deoxyribose 5'-phosphate)-2'-deoxyribonucleotide-DNA = a 3'-end 2'-deoxyribonucleotide-(2,3-dehydro-2,3-deoxyribose 5'-phosphate)-DNA + a 5'-end 5'-phospho-2'-deoxyribonucleoside-DNA + H(+). In terms of biological role, involved in base excision repair of DNA damaged by oxidation or by mutagenic agents. Acts as a DNA glycosylase that recognizes and removes damaged bases. Has a preference for oxidized purines, such as 7,8-dihydro-8-oxoguanine (8-oxoG). Has AP (apurinic/apyrimidinic) lyase activity and introduces nicks in the DNA strand. Cleaves the DNA backbone by beta-delta elimination to generate a single-strand break at the site of the removed base with both 3'- and 5'-phosphates. This is Formamidopyrimidine-DNA glycosylase from Ralstonia pickettii (strain 12J).